Consider the following 294-residue polypeptide: Maltose/maltodextrin import ATP-binding protein MalK (294 aa).

In terms of domain architecture, ABC transporter spans 4–233; the sequence is VQLRNVTKAW…PADRFVAGFI (230 aa). 36–43 provides a ligand contact to ATP; it reads GPSGCGKS.

It belongs to the ABC transporter superfamily. Maltooligosaccharide importer (TC 3.A.1.1.1) family. The complex is composed of two ATP-binding proteins (MalK), two transmembrane proteins (MalG and MalK) and a solute-binding protein (MalE).

Its subcellular location is the cell inner membrane. It carries out the reaction D-maltose(out) + ATP + H2O = D-maltose(in) + ADP + phosphate + H(+). In terms of biological role, part of the ABC transporter complex MalEFGK involved in maltose/maltodextrin import. Responsible for energy coupling to the transport system. This chain is Maltose/maltodextrin import ATP-binding protein MalK, found in Klebsiella aerogenes (Enterobacter aerogenes).